The following is a 132-amino-acid chain: Cytochrome c' (132 aa).

Heme c-binding residues include Arg10, Gln11, Asp65, Cys122, Cys125, and His126.

Post-translationally, binds 1 heme c group covalently per subunit.

Its function is as follows. Cytochrome c' is the most widely occurring bacterial c-type cytochrome. Cytochromes c' are high-spin proteins and the heme has no sixth ligand. Their exact function is not known. This chain is Cytochrome c', found in Halomonas halodenitrificans (strain ATCC 12084 / NCIMB 8669) (Paracoccus halodenitrificans).